The chain runs to 302 residues: Probable alpha-L-glutamate ligase (302 aa).

The region spanning 104–287 (MQLLSRKGIG…IAGMVFEFLE (184 aa)) is the ATP-grasp domain. ATP contacts are provided by residues lysine 141, 178–179 (EF), aspartate 187, and 211–213 (RSN). Mg(2+) is bound by residues aspartate 248, glutamate 260, and asparagine 262. Mn(2+)-binding residues include aspartate 248, glutamate 260, and asparagine 262.

Belongs to the RimK family. Requires Mg(2+) as cofactor. Mn(2+) serves as cofactor.

This Psychromonas ingrahamii (strain DSM 17664 / CCUG 51855 / 37) protein is Probable alpha-L-glutamate ligase.